The primary structure comprises 539 residues: Chaperonin GroEL (539 aa).

Residues Thr29–Pro32, Asp86–Thr90, Gly413, Asn477–Ala479, and Asp493 contribute to the ATP site.

Belongs to the chaperonin (HSP60) family. In terms of assembly, forms a cylinder of 14 subunits composed of two heptameric rings stacked back-to-back. Interacts with the co-chaperonin GroES.

It localises to the cytoplasm. It carries out the reaction ATP + H2O + a folded polypeptide = ADP + phosphate + an unfolded polypeptide.. Its function is as follows. Together with its co-chaperonin GroES, plays an essential role in assisting protein folding. The GroEL-GroES system forms a nano-cage that allows encapsulation of the non-native substrate proteins and provides a physical environment optimized to promote and accelerate protein folding. This Clavibacter michiganensis subsp. michiganensis (strain NCPPB 382) protein is Chaperonin GroEL.